A 156-amino-acid polypeptide reads, in one-letter code: Small ribosomal subunit protein uS7 (156 aa).

The protein belongs to the universal ribosomal protein uS7 family. Part of the 30S ribosomal subunit. Contacts proteins S9 and S11.

Functionally, one of the primary rRNA binding proteins, it binds directly to 16S rRNA where it nucleates assembly of the head domain of the 30S subunit. Is located at the subunit interface close to the decoding center, probably blocks exit of the E-site tRNA. This chain is Small ribosomal subunit protein uS7, found in Photorhabdus laumondii subsp. laumondii (strain DSM 15139 / CIP 105565 / TT01) (Photorhabdus luminescens subsp. laumondii).